Reading from the N-terminus, the 267-residue chain is Large ribosomal subunit protein uL4 (267 aa).

It belongs to the universal ribosomal protein uL4 family. As to quaternary structure, part of the 50S ribosomal subunit.

One of the primary rRNA binding proteins, this protein initially binds near the 5'-end of the 23S rRNA. It is important during the early stages of 50S assembly. It makes multiple contacts with different domains of the 23S rRNA in the assembled 50S subunit and ribosome. Its function is as follows. Forms part of the polypeptide exit tunnel. This Saccharolobus islandicus (strain L.S.2.15 / Lassen #1) (Sulfolobus islandicus) protein is Large ribosomal subunit protein uL4.